The chain runs to 371 residues: Probable acetylxylan esterase A (371 aa).

The signal sequence occupies residues 1 to 19 (MRALSVFVALFSFLALSSA). The segment at 32 to 304 (GSLQQVTNFG…GEQDMEWFGF (273 aa)) is catalytic. Serine 149 (charge relay system) is an active-site residue. A glycan (N-linked (GlcNAc...) asparagine) is linked at asparagine 191. Residues 305 to 335 (TGGSSSTTTTATTPPTTSTTTSSGGSSTSTG) form a disordered region. Positions 305 to 336 (TGGSSSTTTTATTPPTTSTTTSSGGSSTSTGV) are ser/Thr-rich linker. The span at 307 to 335 (GSSSTTTTATTPPTTSTTTSSGGSSTSTG) shows a compositional bias: low complexity. A CBM1 domain is found at 335–371 (GVAEHWGQCGGNGWTGPTACASGYTCTVINEWYSQCL).

The protein belongs to the carbohydrate esterase 1 (CE1) family. AxeA subfamily. As to quaternary structure, monomer.

It is found in the secreted. It catalyses the reaction Deacetylation of xylans and xylo-oligosaccharides.. Its pathway is glycan degradation; xylan degradation. Functionally, acetylxylan esterase involved in the hydrolysis of xylan, a major structural heterogeneous polysaccharide found in plant biomass representing the second most abundant polysaccharide in the biosphere, after cellulose. Degrades acetylated xylans by cleaving acetyl side groups from the hetero-xylan backbone. The chain is Probable acetylxylan esterase A (axeA) from Aspergillus fumigatus (strain ATCC MYA-4609 / CBS 101355 / FGSC A1100 / Af293) (Neosartorya fumigata).